Here is a 650-residue protein sequence, read N- to C-terminus: Chaperone protein DnaK (650 aa).

Threonine 200 carries the post-translational modification Phosphothreonine; by autocatalysis.

The protein belongs to the heat shock protein 70 family.

Its function is as follows. Acts as a chaperone. The sequence is that of Chaperone protein DnaK from Burkholderia orbicola (strain MC0-3).